Reading from the N-terminus, the 246-residue chain is 14-3-3 protein eta (246 aa).

N-acetylglycine is present on Gly-2. A phosphoserine mark is found at Ser-25 and Ser-59.

The protein belongs to the 14-3-3 family. Homodimer. Interacts with many nuclear hormone receptors and cofactors including AR, ESR1, ESR2, MC2R, NR3C1, NRIP1, PPARBP and THRA. Interacts with ABL1 (phosphorylated form); the interaction retains it in the cytoplasm. Weakly interacts with CDKN1B. Interacts with ARHGEF28 and CDK16. Interacts with GAB2. Interacts with KCNK18 in a phosphorylation-dependent manner. Interacts with SAMSN1. Interacts with the 'Ser-241' phosphorylated form of PDPK1. Interacts with the 'Thr-369' phosphorylated form of DAPK2. Interacts with PI4KB, TBC1D22A and TBC1D22B. Interacts with SLITRK1. Interacts with MEFV. Phosphorylated on Ser-59 by protein kinase C delta type catalytic subunit in a sphingosine-dependent fashion.

The protein resides in the cytoplasm. Functionally, adapter protein implicated in the regulation of a large spectrum of both general and specialized signaling pathways. Binds to a large number of partners, usually by recognition of a phosphoserine or phosphothreonine motif. Binding generally results in the modulation of the activity of the binding partner. Negatively regulates the kinase activity of PDPK1. This is 14-3-3 protein eta (YWHAH) from Bos taurus (Bovine).